Reading from the N-terminus, the 109-residue chain is B melanoma antigen 2 (109 aa).

Positions 1–17 are cleaved as a signal peptide; it reads MAAGVVFLALSAQLLQA.

The protein belongs to the BAGE family. Not expressed in normal tissues except in testis. Expressed in 22% of melanomas, in bladder and lung carcinomas.

It localises to the secreted. Unknown. Candidate gene encoding tumor antigens. In Homo sapiens (Human), this protein is B melanoma antigen 2 (BAGE2).